A 1165-amino-acid chain; its full sequence is Tectonin beta-propeller repeat-containing protein 1 (1165 aa).

TECPR repeat units follow at residues 209–240, 254–285, 301–332, and 344–376; these read LSVW…SLLD, DLLW…SIVE, SVVW…IEMV, and DQVW…KAII. Residues serine 386, serine 388, serine 391, serine 412, and serine 417 each carry the phosphoserine modification. The tract at residues 404–486 is disordered; the sequence is RGSGESAPSD…GPAPTPAELP (83 aa). Residues 611–717 enclose the PH domain; that stretch reads KTGALQWWCD…WLALLSLSCC (107 aa). A TECPR 5 repeat occupies 729–756; the sequence is QAIWSITCKGDIFVSEPSPDLEAHEHPL. 2 positions are modified to phosphoserine: serine 938 and serine 949. 4 TECPR repeats span residues 953 to 984, 998 to 1029, 1044 to 1075, and 1087 to 1127; these read IALW…LHVG, YQVW…YHIP, TSVY…EHVS, and DQVW…DYGI. Positions 1140–1165 are disordered; that stretch reads ATRAPRSSSQEQEPSAPPEAHGPVCC. The segment covering 1143–1153 has biased composition (low complexity); that stretch reads APRSSSQEQEP.

The protein belongs to the TECPR1 family. As to quaternary structure, interacts with ATG5; the interaction is direct. Interacts with WIPI2. Interacts with the ATG5-ATG12 conjugate, the interaction is however mutually exclusive with ATG16, since it does not interact with ATG12-ATG5-ATG16 complex.

The protein resides in the cytoplasmic vesicle. It localises to the autophagosome membrane. Its subcellular location is the lysosome membrane. Functionally, tethering factor involved in autophagy. Involved in autophagosome maturation by promoting the autophagosome fusion with lysosomes: acts by associating with both the ATG5-ATG12 conjugate and phosphatidylinositol-3-phosphate (PtdIns(3)P) present at the surface of autophagosomes. Also involved in selective autophagy against bacterial pathogens, by being required for phagophore/preautophagosomal structure biogenesis and maturation. This Homo sapiens (Human) protein is Tectonin beta-propeller repeat-containing protein 1 (TECPR1).